The chain runs to 1697 residues: Phosphatidylinositol 3-kinase 3 (1697 aa).

6 disordered regions span residues arginine 57–cysteine 91, isoleucine 169–isoleucine 229, lysine 244–isoleucine 279, lysine 310–glycine 376, serine 398–serine 428, and aspartate 440–glutamate 504. Low complexity-rich tracts occupy residues asparagine 60–asparagine 87, asparagine 170–asparagine 196, and asparagine 212–asparagine 222. Composition is skewed to low complexity over residues asparagine 312–serine 374 and serine 398–serine 408. Polar residues-rich tracts occupy residues isoleucine 409–serine 428 and serine 444–phenylalanine 456. Residues asparagine 457 to aspartate 503 are compositionally biased toward low complexity. In terms of domain architecture, PI3K-RBD spans proline 737–glutamate 823. In terms of domain architecture, C2 PI3K-type spans valine 888–lysine 1036. The PIK helical domain occupies glycine 1060–tyrosine 1238. Residues isoleucine 1304–threonine 1581 form the PI3K/PI4K catalytic domain. Positions serine 1310–valine 1316 are G-loop. A catalytic loop region spans residues glycine 1447–asparagine 1455. The segment at histidine 1466 to threonine 1492 is activation loop. The segment covering alanine 1609–leucine 1625 has biased composition (low complexity). Positions alanine 1609–lysine 1697 are disordered. 5 repeat units span residues glutamine 1622 to aspartate 1626, leucine 1627 to aspartate 1631, leucine 1632 to aspartate 1636, serine 1642 to aspartate 1646, and leucine 1647 to aspartate 1651. A 5 X 5 AA approximate repeats region spans residues glutamine 1622–aspartate 1651. Composition is skewed to basic and acidic residues over residues aspartate 1626–asparagine 1681 and aspartate 1688–lysine 1697. Residues lysine 1659 to glutamate 1672 are 7 X 2 AA tandem repeats of K-E.

The protein belongs to the PI3/PI4-kinase family.

It carries out the reaction a 1,2-diacyl-sn-glycero-3-phospho-(1D-myo-inositol) + ATP = a 1,2-diacyl-sn-glycero-3-phospho-(1D-myo-inositol-3-phosphate) + ADP + H(+). The sequence is that of Phosphatidylinositol 3-kinase 3 (pikC) from Dictyostelium discoideum (Social amoeba).